Reading from the N-terminus, the 411-residue chain is Lissencephaly-1 homolog (411 aa).

The LisH domain occupies 9 to 41; sequence QREELNQAIADYLGSNGYSSALEAFRKEADISG. Residues 56–83 are a coiled coil; that stretch reads TSVIRLQKKVMELEAKLSEAEKEVIEGA. 7 WD repeats span residues 106–147, 149–187, 191–230, 233–272, 275–334, 337–376, and 379–411; these read GHRA…RSLK, HTSSVQDIAFDSQGKLLASCSADLSIKLWDFQQSYDCVK, GHDHNVSSVAFVPAGDYVLSASRDQTIKMWEVATGYCVKT, GHREWIRMVRVHMDGNIFASCSIDHSIRIWSINSRDCKAE, AHDH…CLFV, GHDNWVRELTFHPGGKYLVSASDDKTIRVWDLRNKRFMKT, and AHQHFCTSVDFHKKLPYVISGSVDNTVKVWECR.

The protein belongs to the WD repeat LIS1/nudF family.

The protein resides in the cytoplasm. Its subcellular location is the cytoskeleton. It is found in the microtubule organizing center. It localises to the centrosome. Functionally, positively regulates the activity of the minus-end directed microtubule motor protein dynein. May enhance dynein-mediated microtubule sliding by targeting dynein to the microtubule plus end. Required for several dynein- and microtubule-dependent processes. This Glossina morsitans morsitans (Savannah tsetse fly) protein is Lissencephaly-1 homolog.